Consider the following 328-residue polypeptide: Naphthalene 1,2-dioxygenase/salicylate 5-hydroxylase systems, ferredoxin--NAD(P)(+), reductase component (328 aa).

A 2Fe-2S ferredoxin-type domain is found at 1-89 (MELVVEPLNL…DCTIEIPESD (89 aa)). [2Fe-2S] cluster contacts are provided by C35, C40, C43, and C73. The region spanning 96-193 (ARIVKGTVTA…SGPLGTAYLR (98 aa)) is the FAD-binding FR-type domain.

The protein belongs to the bacterial ring-hydroxylating dioxygenase ferredoxin reductase family. As to quaternary structure, ferredoxin reductase NagAa belongs to both the salicylate 5-hydroxylase (S5H) and the naphthalene 1,2-dioxygenase (NDO) multicomponent enzyme systems. The NDO multicomponent enzyme system is composed of an electron transfer component and a dioxygenase component (iron sulfur protein (ISP)). The electron transfer component is composed of a ferredoxin reductase (NagAa) and a ferredoxin (NagAb), and the dioxygenase component is formed by a large alpha subunit (NagAc) and a small beta subunit (NagAd). The S5H multicomponent enzyme system is composed of an electron transfer component and a monooxygenase component. The electron transfer component is comprised of a ferredoxin reductase (NagAa) and a ferredoxin (NagAb), and the monooxygenase component is formed by a large subunit (NagG) and a small subunit (NagH). It depends on [2Fe-2S] cluster as a cofactor. FAD serves as cofactor.

The catalysed reaction is 2 reduced [2Fe-2S]-[ferredoxin] + NAD(+) + H(+) = 2 oxidized [2Fe-2S]-[ferredoxin] + NADH. It carries out the reaction 2 reduced [2Fe-2S]-[ferredoxin] + NADP(+) + H(+) = 2 oxidized [2Fe-2S]-[ferredoxin] + NADPH. It participates in aromatic compound metabolism; naphthalene degradation. Its function is as follows. Component of two multicomponent enzyme systems which are involved in the catabolism of naphthalene. Plays a role as an electron transfer component for both salicylate 5-hydroxylase (S5H) and naphthalene 1,2-dioxygenase (NDO) systems, by transferring electrons from NAD(P)H to the oxygenase component via the ferredoxin NagAb. The electron transport chain from the two systems can use both NADH and NADPH as electron donors at approximately similar rates. In Ralstonia sp, this protein is Naphthalene 1,2-dioxygenase/salicylate 5-hydroxylase systems, ferredoxin--NAD(P)(+), reductase component.